Reading from the N-terminus, the 308-residue chain is Ornithine carbamoyltransferase (308 aa).

Carbamoyl phosphate is bound by residues 57–60, Q84, R108, and 135–138; these read STRT and HPCQ. L-ornithine contacts are provided by residues N166, D224, and 228–229; that span reads SM. Carbamoyl phosphate-binding positions include 264-265 and R292; that span reads CL.

The protein belongs to the aspartate/ornithine carbamoyltransferase superfamily. OTCase family.

The protein resides in the cytoplasm. It carries out the reaction carbamoyl phosphate + L-ornithine = L-citrulline + phosphate + H(+). It functions in the pathway amino-acid degradation; L-arginine degradation via ADI pathway; carbamoyl phosphate from L-arginine: step 2/2. Its function is as follows. Reversibly catalyzes the transfer of the carbamoyl group from carbamoyl phosphate (CP) to the N(epsilon) atom of ornithine (ORN) to produce L-citrulline. This is Ornithine carbamoyltransferase from Ralstonia pickettii (strain 12J).